The sequence spans 164 residues: Lipoprotein signal peptidase (164 aa).

3 helical membrane passes run 12–32, 70–90, and 102–122; these read WLWLVVVVLIIDLGSKYLILQ, WFFAGIAIGISVTLVVMMYRS, and ALIIGGALGNLFDRLWHGFVV. Residues Asp-123 and Asp-141 contribute to the active site. Residues 137–157 form a helical membrane-spanning segment; that stretch reads FNLADTAICVGAALIVLEGFL.

The protein belongs to the peptidase A8 family.

The protein localises to the cell inner membrane. The enzyme catalyses Release of signal peptides from bacterial membrane prolipoproteins. Hydrolyzes -Xaa-Yaa-Zaa-|-(S,diacylglyceryl)Cys-, in which Xaa is hydrophobic (preferably Leu), and Yaa (Ala or Ser) and Zaa (Gly or Ala) have small, neutral side chains.. It functions in the pathway protein modification; lipoprotein biosynthesis (signal peptide cleavage). This protein specifically catalyzes the removal of signal peptides from prolipoproteins. The sequence is that of Lipoprotein signal peptidase from Escherichia coli O157:H7.